The following is a 164-amino-acid chain: Phosphopantetheine adenylyltransferase (164 aa).

Residue Ser10 participates in substrate binding. ATP is bound by residues 10–11 (SF) and His18. Residues Lys42, Leu74, and Arg88 each coordinate substrate. ATP is bound by residues 89–91 (GLR), Glu99, and 124–130 (YAFLSSS).

It belongs to the bacterial CoaD family. Homohexamer. Requires Mg(2+) as cofactor.

It localises to the cytoplasm. It catalyses the reaction (R)-4'-phosphopantetheine + ATP + H(+) = 3'-dephospho-CoA + diphosphate. Its pathway is cofactor biosynthesis; coenzyme A biosynthesis; CoA from (R)-pantothenate: step 4/5. In terms of biological role, reversibly transfers an adenylyl group from ATP to 4'-phosphopantetheine, yielding dephospho-CoA (dPCoA) and pyrophosphate. This chain is Phosphopantetheine adenylyltransferase, found in Geobacillus thermodenitrificans (strain NG80-2).